Reading from the N-terminus, the 196-residue chain is Holliday junction branch migration complex subunit RuvA (196 aa).

Positions 1–63 (MYEYFKGIIS…EDAELLYGFA (63 aa)) are domain I. Residues 64-142 (TEEEKQLFLS…AAGSPAESKA (79 aa)) are domain II. The flexible linker stretch occupies residues 143–146 (PVQT). The tract at residues 147-196 (ADNQELEEAMEAMLALGYKAAELKKIKKFFEGTTDTAENYIKSALKMLVK) is domain III.

The protein belongs to the RuvA family. As to quaternary structure, homotetramer. Forms an RuvA(8)-RuvB(12)-Holliday junction (HJ) complex. HJ DNA is sandwiched between 2 RuvA tetramers; dsDNA enters through RuvA and exits via RuvB. An RuvB hexamer assembles on each DNA strand where it exits the tetramer. Each RuvB hexamer is contacted by two RuvA subunits (via domain III) on 2 adjacent RuvB subunits; this complex drives branch migration. In the full resolvosome a probable DNA-RuvA(4)-RuvB(12)-RuvC(2) complex forms which resolves the HJ.

The protein resides in the cytoplasm. Its function is as follows. The RuvA-RuvB-RuvC complex processes Holliday junction (HJ) DNA during genetic recombination and DNA repair, while the RuvA-RuvB complex plays an important role in the rescue of blocked DNA replication forks via replication fork reversal (RFR). RuvA specifically binds to HJ cruciform DNA, conferring on it an open structure. The RuvB hexamer acts as an ATP-dependent pump, pulling dsDNA into and through the RuvAB complex. HJ branch migration allows RuvC to scan DNA until it finds its consensus sequence, where it cleaves and resolves the cruciform DNA. This Streptococcus sanguinis (strain SK36) protein is Holliday junction branch migration complex subunit RuvA.